Reading from the N-terminus, the 898-residue chain is Cilium assembly protein DZIP1 (898 aa).

The disordered stretch occupies residues 14-66 (DPPGTHSSAGIPSLLSSPQSQPSSGSQSRPAPSTMSGPLTSSGASTSIPPPFK). Low complexity predominate over residues 25–46 (PSLLSSPQSQPSSGSQSRPAPS). Residues 47-60 (TMSGPLTSSGASTS) are compositionally biased toward polar residues. A coiled-coil region spans residues 145–197 (LSISLQAAEERLLAEAREREQICVQLQKKTQDAKALKEELKQRKKIIASQQAM). The C2H2-type zinc finger occupies 207–230 (HKCQHCEKAFMNASFLQSHMQRRH). 2 coiled-coil regions span residues 242-353 (NQKK…VQTQ) and 407-447 (SAVS…ISSK). Positions 435–463 (TSQNKQMKQISSKPPTITVQREGVSTPSP) are enriched in polar residues. Disordered stretches follow at residues 435-509 (TSQN…SWQK), 585-739 (EQRV…WTDG), and 773-878 (KSLE…DAGT). Positions 495–505 (SSISESPTENR) are enriched in low complexity. Residues 573-590 (YRRALKEISHKLEQRVKE) adopt a coiled-coil conformation. The span at 605–652 (VVQSRPRSSSFPSTVTRVMSGPASKQQRTPQPVPRSRTNVPHKTSTPL) shows a compositional bias: polar residues. Acidic residues predominate over residues 662–684 (SDEDSSEEEEEEEEEEESSDEES). Polar residues-rich tracts occupy residues 685 to 715 (PQMQ…QSVR) and 723 to 734 (AEPTNVTTLSDS). Residues 797 to 815 (KPTDVRNTRQNAKKELKYS) are compositionally biased toward basic and acidic residues. The span at 816-826 (DDDDDDDDDWD) shows a compositional bias: acidic residues. A compositionally biased stretch (polar residues) spans 855 to 866 (DTSTSVWGSSTG).

This sequence belongs to the DZIP C2H2-type zinc-finger protein family. Expressed throughout the embryo starting at 12 hours.

It localises to the cell projection. The protein resides in the cilium. Its subcellular location is the cytoplasm. The protein localises to the cytoskeleton. It is found in the cilium basal body. It localises to the microtubule organizing center. The protein resides in the centrosome. Its subcellular location is the centriole. The protein localises to the nucleus. Functionally, molecular adapter that recruits protein complexes required for cilium assembly and function to the cilium basal body. Required for establishment of left-right asymmetry during embryogenesis. Acts as a permissive factor that is required for the proper regulation of Hedgehog (Hh) target genes in response to Hh signals. Acts downstream of the Smoothened protein to modulate Gli activity in the somites of the developing embryo. In Danio rerio (Zebrafish), this protein is Cilium assembly protein DZIP1 (dzip1).